An 82-amino-acid polypeptide reads, in one-letter code: DNA-directed RNA polymerase subunit Rpo5 (82 aa).

It belongs to the archaeal Rpo5/eukaryotic RPB5 RNA polymerase subunit family. As to quaternary structure, part of the RNA polymerase complex.

The protein localises to the cytoplasm. It catalyses the reaction RNA(n) + a ribonucleoside 5'-triphosphate = RNA(n+1) + diphosphate. Its function is as follows. DNA-dependent RNA polymerase (RNAP) catalyzes the transcription of DNA into RNA using the four ribonucleoside triphosphates as substrates. The polypeptide is DNA-directed RNA polymerase subunit Rpo5 (Pyrococcus abyssi (strain GE5 / Orsay)).